We begin with the raw amino-acid sequence, 149 residues long: 3-hydroxyacyl-[acyl-carrier-protein] dehydratase FabZ (149 aa).

Histidine 49 is a catalytic residue.

Belongs to the thioester dehydratase family. FabZ subfamily.

Its subcellular location is the cytoplasm. It catalyses the reaction a (3R)-hydroxyacyl-[ACP] = a (2E)-enoyl-[ACP] + H2O. Its function is as follows. Involved in unsaturated fatty acids biosynthesis. Catalyzes the dehydration of short chain beta-hydroxyacyl-ACPs and long chain saturated and unsaturated beta-hydroxyacyl-ACPs. In Sulfurovum sp. (strain NBC37-1), this protein is 3-hydroxyacyl-[acyl-carrier-protein] dehydratase FabZ.